Reading from the N-terminus, the 273-residue chain is DNA repair protein RecO (273 aa).

Positions 250-273 (NVGQNPSGKDDLNERRDVDGTGES) are disordered. Residues 257-273 (GKDDLNERRDVDGTGES) are compositionally biased toward basic and acidic residues.

This sequence belongs to the RecO family.

Involved in DNA repair and RecF pathway recombination. In Desulfitobacterium hafniense (strain DSM 10664 / DCB-2), this protein is DNA repair protein RecO.